Here is a 579-residue protein sequence, read N- to C-terminus: Phosphatidylinositol/phosphatidylcholine transfer protein SFH9 (579 aa).

The region spanning E145–H319 is the CRAL-TRIO domain. The interval D372–N419 is disordered. Positions G379–A394 are enriched in basic and acidic residues. Positions Q512–L539 form a coiled coil.

The protein belongs to the SFH family.

Its subcellular location is the golgi apparatus membrane. It localises to the cell membrane. In terms of biological role, required for transport of secretory proteins from the Golgi complex. Catalyzes the transfer of phosphatidylinositol and phosphatidylcholine between membranes in vitro. The sequence is that of Phosphatidylinositol/phosphatidylcholine transfer protein SFH9 (SFH9) from Arabidopsis thaliana (Mouse-ear cress).